Reading from the N-terminus, the 304-residue chain is Ornithine carbamoyltransferase (304 aa).

Carbamoyl phosphate-binding positions include 53–56 (STRT), Q80, R104, and 131–134 (HPCQ). L-ornithine contacts are provided by residues N162, D219, and 223 to 224 (SM). Residues 259 to 260 (CL) and R287 each bind carbamoyl phosphate.

Belongs to the aspartate/ornithine carbamoyltransferase superfamily. OTCase family.

It is found in the cytoplasm. The catalysed reaction is carbamoyl phosphate + L-ornithine = L-citrulline + phosphate + H(+). Its pathway is amino-acid biosynthesis; L-arginine biosynthesis; L-arginine from L-ornithine and carbamoyl phosphate: step 1/3. In terms of biological role, reversibly catalyzes the transfer of the carbamoyl group from carbamoyl phosphate (CP) to the N(epsilon) atom of ornithine (ORN) to produce L-citrulline. This is Ornithine carbamoyltransferase from Herminiimonas arsenicoxydans.